The primary structure comprises 729 residues: 1,4-alpha-glucan branching enzyme GlgB (729 aa).

The Nucleophile role is filled by aspartate 409. Catalysis depends on glutamate 462, which acts as the Proton donor.

Belongs to the glycosyl hydrolase 13 family. GlgB subfamily. As to quaternary structure, monomer.

It catalyses the reaction Transfers a segment of a (1-&gt;4)-alpha-D-glucan chain to a primary hydroxy group in a similar glucan chain.. It participates in glycan biosynthesis; glycogen biosynthesis. Catalyzes the formation of the alpha-1,6-glucosidic linkages in glycogen by scission of a 1,4-alpha-linked oligosaccharide from growing alpha-1,4-glucan chains and the subsequent attachment of the oligosaccharide to the alpha-1,6 position. This Saccharophagus degradans (strain 2-40 / ATCC 43961 / DSM 17024) protein is 1,4-alpha-glucan branching enzyme GlgB.